The sequence spans 187 residues: Large ribosomal subunit protein uL6 (187 aa).

The protein belongs to the universal ribosomal protein uL6 family. Part of the 50S ribosomal subunit.

In terms of biological role, this protein binds to the 23S rRNA, and is important in its secondary structure. It is located near the subunit interface in the base of the L7/L12 stalk, and near the tRNA binding site of the peptidyltransferase center. The chain is Large ribosomal subunit protein uL6 from Roseiflexus sp. (strain RS-1).